The sequence spans 277 residues: Probable cyclic nucleotide phosphodiesterase MCR_0369 (277 aa).

Fe cation contacts are provided by Asp17, His19, Asp53, Asn83, His165, His204, and His206. AMP contacts are provided by residues His19, Asp53, and 83-84 (NH). His206 is a binding site for AMP.

Belongs to the cyclic nucleotide phosphodiesterase class-III family. Fe(2+) is required as a cofactor.

The polypeptide is Probable cyclic nucleotide phosphodiesterase MCR_0369 (Moraxella catarrhalis (strain BBH18)).